A 447-amino-acid chain; its full sequence is METKQILETIQMISEEKLDIRTITMGISLFDCIDSDGVKARQKIYDKLTTSAKDLVKVADRIESEYGIPIVNKRISVTPISMIAAACHDDNYVAYAQTMEKAAETLGVDLIGGFSALVQKGYQSGDRKLIASMPEALSETQRVCGSVNVGSTRAGINMDAVKQMGQVVKDLSEIDPVSCMSLVIFSNAVEDNPFMAGAFHGVGEADKVINVGISGPGVVKRALEQVKGESIDTVSETIKKTAFKVTRMGQFVGNVAAKALNVPFGIVDLSLAPTPSQGDSVAEILEEIGLESVGAPGTTAALALLNDAVKKGGVMACEHVGGLSGAFIPVSEDSGMIKAVEHGNLNLEKLEAMTAVCSVGLDMVAVPGDTPAETISGMIADEAAIGVINNKTTAVRVIPAKGKQVGEQIDFGGIFGYAPVMPVNTNSPAKFVQRGGRIPAPIHSFKN.

Belongs to the UPF0210 family. As to quaternary structure, homodimer.

This is UPF0210 protein lhv_0606 from Lactobacillus helveticus (strain DPC 4571).